An 881-amino-acid chain; its full sequence is Envelope glycoprotein gp160 (881 aa).

The first 22 residues, 1 to 22 (MGCLKNQLLIAILLLSVYGIYC), serve as a signal peptide directing secretion. Topologically, residues 23-696 (TQYVTVFYGV…ASWIKYIQYG (674 aa)) are extracellular. N-linked (GlcNAc...) asparagine; by host glycosylation is present at Asn37. A disulfide bond links Cys44 and Cys57. 18 N-linked (GlcNAc...) asparagine; by host glycosylation sites follow: Asn70, Asn114, Asn148, Asn158, Asn173, Asn186, Asn200, Asn204, Asn214, Asn246, Asn249, Asn280, Asn286, Asn297, Asn308, Asn318, Asn373, and Asn379. Cystine bridges form between Cys101-Cys222, Cys108-Cys213, Cys113-Cys170, Cys235-Cys265, and Cys245-Cys257. The V1 stretch occupies residues 113–169 (CNKSETDRWGLTKSSTTITTAAPTSAPVSEKLDMVNETSSCIAQNNCTGLEQEQMIS). The segment at 170-213 (CKFNMTGLKRDKTKEYNETWYSTDLVCEQRNSTDNESRCYMNHC) is V2. The segment at 313 to 345 (CRRPGNKTVLPVTIMSELVFHSQPINDRPKQAW) is V3. Cys313 and Cys346 form a disulfide bridge. 2 cysteine pairs are disulfide-bonded: Cys397–Cys461 and Cys404–Cys434. The tract at residues 404 to 434 (CKMNWFLNWVEDKDVTTQRPKERHRKNYVPC) is V4. Asn462 and Asn478 each carry an N-linked (GlcNAc...) asparagine; by host glycan. Residues 477–484 (GNQTSITM) form a V5 region. Residues 528-548 (GVFVLGFLGFLATAGSAIGAV) are fusion peptide. The tract at residues 591 to 607 (LQTKVTAIEKYLKDQAQ) is immunosuppression. 3 N-linked (GlcNAc...) asparagine; by host glycosylation sites follow: Asn627, Asn636, and Asn652. Positions 636–668 (NDTWQEWERKVDFLEENITALLEEAQIQQEKNM) form a coiled coil. The MPER; binding to GalCer stretch occupies residues 673–694 (KLNSWDVFGNWFDLASWIKYIQ). Residues 697-717 (IYVVVGVILLRIVIYIVQMLA) traverse the membrane as a helical segment. The Cytoplasmic segment spans residues 718–881 (KLRQGYRPVF…IRQGLELTLL (164 aa)). Positions 723 to 726 (YRPV) match the YXXV motif; contains endocytosis signal motif. Positions 737–761 (THTQQDPALPTREGKEGDGGEGGGN) are disordered. Cys789 carries the S-palmitoyl cysteine; by host lipid modification. The Di-leucine internalization motif signature appears at 880 to 881 (LL).

As to quaternary structure, the mature envelope protein (Env) consists of a homotrimer of non-covalently associated gp120-gp41 heterodimers. The resulting complex protrudes from the virus surface as a spike. Interacts with host CD4 and CCR5. Gp120 also interacts with the C-type lectins CD209/DC-SIGN and CLEC4M/DC-SIGNR (collectively referred to as DC-SIGN(R)). The mature envelope protein (Env) consists of a homotrimer of non-covalently associated gp120-gp41 heterodimers. The resulting complex protrudes from the virus surface as a spike. In terms of processing, specific enzymatic cleavages in vivo yield mature proteins. Envelope glycoproteins are synthesized as an inactive precursor that is heavily N-glycosylated and processed likely by host cell furin in the Golgi to yield the mature SU and TM proteins. The cleavage site between SU and TM requires the minimal sequence [KR]-X-[KR]-R. Post-translationally, palmitoylation of the transmembrane protein and of Env polyprotein (prior to its proteolytic cleavage) is essential for their association with host cell membrane lipid rafts. Palmitoylation is therefore required for envelope trafficking to classical lipid rafts, but not for viral replication.

It localises to the virion membrane. It is found in the host cell membrane. The protein resides in the host endosome membrane. Functionally, the surface protein gp120 (SU) attaches the virus to the host lymphoid cell by binding to the primary receptor CD4. This interaction induces a structural rearrangement creating a high affinity binding site for a chemokine coreceptor like CCR5. This peculiar 2 stage receptor-interaction strategy allows gp120 to maintain the highly conserved coreceptor-binding site in a cryptic conformation, protected from neutralizing antibodies. These changes are transmitted to the transmembrane protein gp41 and are thought to activate its fusogenic potential by unmasking its fusion peptide. In terms of biological role, surface protein gp120 (SU) may target the virus to gut-associated lymphoid tissue (GALT) by binding host ITGA4/ITGB7 (alpha-4/beta-7 integrins), a complex that mediates T-cell migration to the GALT. Interaction between gp120 and ITGA4/ITGB7 would allow the virus to enter GALT early in the infection, infecting and killing most of GALT's resting CD4+ T-cells. This T-cell depletion is believed to be the major insult to the host immune system leading to AIDS. The surface protein gp120 is a ligand for CD209/DC-SIGN and CLEC4M/DC-SIGNR, which are respectively found on dendritic cells (DCs), and on endothelial cells of liver sinusoids and lymph node sinuses. These interactions allow capture of viral particles at mucosal surfaces by these cells and subsequent transmission to permissive cells. DCs are professional antigen presenting cells, critical for host immunity by inducing specific immune responses against a broad variety of pathogens. They act as sentinels in various tissues where they take up antigen, process it, and present it to T-cells following migration to lymphoid organs. SIV subverts the migration properties of dendritic cells to gain access to CD4+ T-cells in lymph nodes. Virus transmission to permissive T-cells occurs either in trans (without DCs infection, through viral capture and transmission), or in cis (following DCs productive infection, through the usual CD4-gp120 interaction), thereby inducing a robust infection. In trans infection, bound virions remain infectious over days and it is proposed that they are not degraded, but protected in non-lysosomal acidic organelles within the DCs close to the cell membrane thus contributing to the viral infectious potential during DCs' migration from the periphery to the lymphoid tissues. On arrival at lymphoid tissues, intact virions recycle back to DCs' cell surface allowing virus transmission to CD4+ T-cells. Virion capture also seems to lead to MHC-II-restricted viral antigen presentation, and probably to the activation of SIV-specific CD4+ cells. Its function is as follows. The transmembrane protein gp41 (TM) acts as a class I viral fusion protein. Under the current model, the protein has at least 3 conformational states: pre-fusion native state, pre-hairpin intermediate state, and post-fusion hairpin state. During fusion of viral and target intracellular membranes, the coiled coil regions (heptad repeats) assume a trimer-of-hairpins structure, positioning the fusion peptide in close proximity to the C-terminal region of the ectodomain. The formation of this structure appears to drive apposition and subsequent fusion of viral and target cell membranes. Complete fusion occurs in host cell endosomes. The virus undergoes clathrin-dependent internalization long before endosomal fusion, thus minimizing the surface exposure of conserved viral epitopes during fusion and reducing the efficacy of inhibitors targeting these epitopes. Membranes fusion leads to delivery of the nucleocapsid into the cytoplasm. Functionally, the envelope glycoprotein gp160 precursor down-modulates cell surface CD4 antigen by interacting with it in the endoplasmic reticulum and blocking its transport to the cell surface. In terms of biological role, the gp120-gp41 heterodimer allows rapid transcytosis of the virus through CD4 negative cells such as simple epithelial monolayers of the intestinal, rectal and endocervical epithelial barriers. Both gp120 and gp41 specifically recognize glycosphingolipids galactosyl-ceramide (GalCer) or 3' sulfo-galactosyl-ceramide (GalS) present in the lipid rafts structures of epithelial cells. Binding to these alternative receptors allows the rapid transcytosis of the virus through the epithelial cells. This transcytotic vesicle-mediated transport of virions from the apical side to the basolateral side of the epithelial cells does not involve infection of the cells themselves. This is Envelope glycoprotein gp160 (env) from Simian immunodeficiency virus (isolate K78) (SIV-mac).